Consider the following 144-residue polypeptide: Gas vesicle protein I1 (144 aa).

The segment at 1-144 is disordered; the sequence is MSDKQQQKHK…SPTEDEVNDE (144 aa). 2 stretches are compositionally biased toward basic residues: residues 7–17 and 26–46; these read QKHKQKARQAR and KARR…TRNR. The segment covering 75–94 has biased composition (polar residues); it reads MPPQKSNAENAVRNSHSTVP. Residues 122–136 are compositionally biased toward low complexity; it reads SEASAPSDESASGSP.

This sequence belongs to the gas vesicle GvpI family. As to quaternary structure, gvpF to GvpM interact with each other in vitro, and may form multi-subunit complex(es). Interacts with GvpC1 and GvpO.

The protein resides in the gas vesicle. Functionally, proteins GvpF to GvpM might be involved in nucleating gas vesicle formation. A minor component of the gas vesicle. Gas vesicles are hollow, gas filled proteinaceous nanostructures found in several microbial planktonic microorganisms. They allow positioning of halobacteria at the optimal depth for growth in the poorly aerated, shallow brine pools of their habitat. Expression of a 9.5 kb p-vac DNA fragment containing 2 divergently transcribed regions (gvpD-gvpE-gvpF-gvpG-gvpH-gvpI-gvpJ-gvpK-gvpL-gvpM and gvpA-gvpC-gvpN-gvpO) allows H.volcanii to produce gas vesicles. A similar region restores gas vesicle production in H.halobium without the p-vac locus, but it still has the c-vac locus. This chain is Gas vesicle protein I1 (gvpI11), found in Halobacterium salinarum (strain ATCC 700922 / JCM 11081 / NRC-1) (Halobacterium halobium).